A 183-amino-acid chain; its full sequence is Shikimate kinase (183 aa).

15–20 (GSGKST) serves as a coordination point for ATP. S19 serves as a coordination point for Mg(2+). Substrate contacts are provided by D37, R61, and G85. R123 provides a ligand contact to ATP. R142 contacts substrate.

The protein belongs to the shikimate kinase family. As to quaternary structure, monomer. Mg(2+) serves as cofactor.

It localises to the cytoplasm. It catalyses the reaction shikimate + ATP = 3-phosphoshikimate + ADP + H(+). The protein operates within metabolic intermediate biosynthesis; chorismate biosynthesis; chorismate from D-erythrose 4-phosphate and phosphoenolpyruvate: step 5/7. Catalyzes the specific phosphorylation of the 3-hydroxyl group of shikimic acid using ATP as a cosubstrate. The sequence is that of Shikimate kinase from Paracidovorax citrulli (strain AAC00-1) (Acidovorax citrulli).